Consider the following 352-residue polypeptide: Molybdenum import ATP-binding protein ModC (352 aa).

In terms of domain architecture, ABC transporter spans 1–229; the sequence is MLELNFSQTL…SVMHPWLPKE (229 aa). 31–38 provides a ligand contact to ATP; that stretch reads GVSGAGKT. One can recognise a Mop domain in the interval 289–352; sequence QTSIRNVLRA…AQVKSVSITA (64 aa).

This sequence belongs to the ABC transporter superfamily. Molybdate importer (TC 3.A.1.8) family. As to quaternary structure, the complex is composed of two ATP-binding proteins (ModC), two transmembrane proteins (ModB) and a solute-binding protein (ModA).

Its subcellular location is the cell inner membrane. It catalyses the reaction molybdate(out) + ATP + H2O = molybdate(in) + ADP + phosphate + H(+). Its function is as follows. Part of the ABC transporter complex ModABC involved in molybdenum import. Responsible for energy coupling to the transport system. This Salmonella typhi protein is Molybdenum import ATP-binding protein ModC.